Consider the following 149-residue polypeptide: Ribonuclease pancreatic alpha-type (149 aa).

The signal sequence occupies residues Met1–Gly25. Substrate-binding residues include Lys32 and Arg35. The active-site Proton acceptor is the His37. Cystine bridges form between Cys51–Cys109, Cys65–Cys120, Cys83–Cys135, and Cys90–Cys97. Substrate is bound by residues Lys66–Thr70, Lys91, and Arg110. His144 functions as the Proton donor in the catalytic mechanism.

It belongs to the pancreatic ribonuclease family. In terms of assembly, monomer.

The protein localises to the secreted. It catalyses the reaction an [RNA] containing cytidine + H2O = an [RNA]-3'-cytidine-3'-phosphate + a 5'-hydroxy-ribonucleotide-3'-[RNA].. The catalysed reaction is an [RNA] containing uridine + H2O = an [RNA]-3'-uridine-3'-phosphate + a 5'-hydroxy-ribonucleotide-3'-[RNA].. Functionally, endonuclease that catalyzes the cleavage of RNA on the 3' side of pyrimidine nucleotides. Acts on single-stranded and double-stranded RNA. The sequence is that of Ribonuclease pancreatic alpha-type from Rattus fuscipes (Bush rat).